The following is a 270-amino-acid chain: Acyl-[acyl-carrier-protein]--UDP-N-acetylglucosamine O-acyltransferase (270 aa).

This sequence belongs to the transferase hexapeptide repeat family. LpxA subfamily. Homotrimer.

It is found in the cytoplasm. It carries out the reaction a (3R)-hydroxyacyl-[ACP] + UDP-N-acetyl-alpha-D-glucosamine = a UDP-3-O-[(3R)-3-hydroxyacyl]-N-acetyl-alpha-D-glucosamine + holo-[ACP]. It participates in glycolipid biosynthesis; lipid IV(A) biosynthesis; lipid IV(A) from (3R)-3-hydroxytetradecanoyl-[acyl-carrier-protein] and UDP-N-acetyl-alpha-D-glucosamine: step 1/6. Its function is as follows. Involved in the biosynthesis of lipid A, a phosphorylated glycolipid that anchors the lipopolysaccharide to the outer membrane of the cell. The chain is Acyl-[acyl-carrier-protein]--UDP-N-acetylglucosamine O-acyltransferase from Helicobacter pylori (strain J99 / ATCC 700824) (Campylobacter pylori J99).